The chain runs to 427 residues: Flavohemoprotein (427 aa).

The 139-residue stretch at 30–168 (ELNESQKQYI…LAKILIDSEK (139 aa)) folds into the Globin domain. Heme b is bound at residue H114. Active-site charge relay system residues include Y124 and E167. The tract at residues 176-427 (WNGFVEFKVT…QSEFFGPYIP (252 aa)) is reductase. The FAD-binding FR-type domain occupies 177–285 (NGFVEFKVTE…SPPAGNFVYK (109 aa)). FAD-binding positions include Y216 and 232–235 (REYS). 301–306 (GIGITP) is a binding site for NADP(+). 421–424 (FFGP) contacts FAD.

This sequence belongs to the globin family. Two-domain flavohemoproteins subfamily. The protein in the C-terminal section; belongs to the flavoprotein pyridine nucleotide cytochrome reductase family. Requires FAD as cofactor. Heme b serves as cofactor.

Its subcellular location is the cytoplasm. It is found in the nucleus. It catalyses the reaction 2 nitric oxide + NADPH + 2 O2 = 2 nitrate + NADP(+) + H(+). The enzyme catalyses 2 nitric oxide + NADH + 2 O2 = 2 nitrate + NAD(+) + H(+). In terms of biological role, is involved in NO detoxification in an aerobic process, termed nitric oxide dioxygenase (NOD) reaction that utilizes O(2) and NAD(P)H to convert NO to nitrate, which protects the fungus from various noxious nitrogen compounds. Therefore, plays a central role in the inducible response to nitrosative stress. In the presence of oxygen and NADH, it has NADH oxidase activity, which leads to the generation of superoxide and H(2)O(2). Under anaerobic conditions, it also exhibits nitric oxide reductase and FAD reductase activities. However, all these reactions are much lower than NOD activity. The protein is Flavohemoprotein of Schizosaccharomyces pombe (strain 972 / ATCC 24843) (Fission yeast).